The chain runs to 380 residues: Mitogen-activated protein kinase mpkC (380 aa).

Residues 20–300 (YVNLQPIGMG…AQDALRHPYL (281 aa)) enclose the Protein kinase domain. Residues 26–34 (IGMGSFGLV) and Lys49 each bind ATP. Catalysis depends on Asp141, which acts as the Proton acceptor. Thr171 is subject to Phosphothreonine. The TXY motif lies at 171 to 173 (TGY). The residue at position 173 (Tyr173) is a Phosphotyrosine.

The protein belongs to the protein kinase superfamily. Ser/Thr protein kinase family. MAP kinase subfamily. HOG1 sub-subfamily. It depends on Mg(2+) as a cofactor. In terms of processing, dually phosphorylated on Thr-171 and Tyr-173, which activates the enzyme.

It carries out the reaction L-seryl-[protein] + ATP = O-phospho-L-seryl-[protein] + ADP + H(+). It catalyses the reaction L-threonyl-[protein] + ATP = O-phospho-L-threonyl-[protein] + ADP + H(+). Its activity is regulated as follows. Activated by tyrosine and threonine phosphorylation. Its function is as follows. Mitogen-activated protein kinase required for growth on media where sorbitol or mannitol is the sole carbon source. This Aspergillus clavatus (strain ATCC 1007 / CBS 513.65 / DSM 816 / NCTC 3887 / NRRL 1 / QM 1276 / 107) protein is Mitogen-activated protein kinase mpkC (mpkC).